The following is a 747-amino-acid chain: Kinesin-like protein KIF3B (747 aa).

An N-acetylmethionine modification is found at Met1. An N-acetylserine; in Kinesin-like protein KIF3B, N-terminally processed modification is found at Ser2. Residues 9–340 form the Kinesin motor domain; it reads SVRVVVRCRP…LRYANRAKNI (332 aa). 96 to 103 is an ATP binding site; sequence GQTGTGKT. The stretch at 346-579 forms a coiled coil; the sequence is VNEDPKDALL…EQTQNELTRE (234 aa). Disordered stretches follow at residues 374–412 and 698–747; these read IGRRKRREKRREGGGSGGGGEEEEEEGEEGEEDGDDKDD and IQVD…LVPK. Acidic residues predominate over residues 393-411; sequence GEEEEEEGEEGEEDGDDKD. Residues 580–747 form a globular region; that stretch reads LKLKHLIIEN…YPQSRGLVPK (168 aa). Residues 701-710 show a composition bias toward polar residues; that stretch reads DASSFESTAS. The segment covering 711–721 has biased composition (basic residues); the sequence is RKPKARPKSGR. The span at 722-735 shows a compositional bias: low complexity; sequence KSGSSSSSSGNPAS.

Belongs to the TRAFAC class myosin-kinesin ATPase superfamily. Kinesin family. Kinesin II subfamily. As to quaternary structure, heterodimer of KIF3A and KIF3B. KIF3A/KIF3B heterodimer interacts with KIFAP3 forming a heterotrimeric (KIF3A/KIF3B/KIFAP3) complex. Interacts with the SMC3 subunit of the cohesin complex. Interacts directly with IFT20. Interacts with FLCN.

It is found in the cytoplasm. The protein localises to the cytoskeleton. The protein resides in the cell projection. Its subcellular location is the cilium. It localises to the dendritic spine. Its function is as follows. Microtubule-based molecular motor that transport intracellular cargos, such as vesicles, organelles and protein complexes. Uses ATP hydrolysis to generate force to bind and move along the microtubule. Plays a role in cilia formation. Involved in photoreceptor integrity and opsin trafficking in rod photoreceptors. Transports vesicles containing N-methyl-D-aspartate (NMDA) receptor subunit GRIN2A into neuronal dendrites. The sequence is that of Kinesin-like protein KIF3B from Mus musculus (Mouse).